The primary structure comprises 504 residues: ATP synthase subunit alpha (504 aa).

Residue 169–176 (GDRQTGKT) coordinates ATP.

It belongs to the ATPase alpha/beta chains family. As to quaternary structure, F-type ATPases have 2 components, CF(1) - the catalytic core - and CF(0) - the membrane proton channel. CF(1) has five subunits: alpha(3), beta(3), gamma(1), delta(1), epsilon(1). CF(0) has three main subunits: a(1), b(2) and c(9-12). The alpha and beta chains form an alternating ring which encloses part of the gamma chain. CF(1) is attached to CF(0) by a central stalk formed by the gamma and epsilon chains, while a peripheral stalk is formed by the delta and b chains.

The protein resides in the cell membrane. It carries out the reaction ATP + H2O + 4 H(+)(in) = ADP + phosphate + 5 H(+)(out). Functionally, produces ATP from ADP in the presence of a proton gradient across the membrane. The alpha chain is a regulatory subunit. In Clostridium botulinum (strain Langeland / NCTC 10281 / Type F), this protein is ATP synthase subunit alpha.